The sequence spans 703 residues: Polyribonucleotide nucleotidyltransferase (703 aa).

Residues Asp-487 and Asp-493 each coordinate Mg(2+). The KH domain occupies Pro-554–Ile-613. One can recognise an S1 motif domain in the interval Gly-623–Lys-691.

The protein belongs to the polyribonucleotide nucleotidyltransferase family. As to quaternary structure, component of the RNA degradosome, which is a multiprotein complex involved in RNA processing and mRNA degradation. It depends on Mg(2+) as a cofactor.

Its subcellular location is the cytoplasm. The enzyme catalyses RNA(n+1) + phosphate = RNA(n) + a ribonucleoside 5'-diphosphate. Involved in mRNA degradation. Catalyzes the phosphorolysis of single-stranded polyribonucleotides processively in the 3'- to 5'-direction. This Hahella chejuensis (strain KCTC 2396) protein is Polyribonucleotide nucleotidyltransferase.